Here is a 1059-residue protein sequence, read N- to C-terminus: MPKRKDIQKIMVIGSGPIVIGQAAEFDYAGTQACLSLKEEGYSVVLVNSNPATIMTDKEIADRVYIEPITLEFVARILRKERPDALLPTLGGQTGLNMAMELSKSGLLEELGVELLGTKLSAIDQAEDRDLFKQLMEELGQPIPESEIVNTVDEALEFAAGIGYPVIVRPAFTLGGTGGGICSNEGELQEIAENGLKISPVTQCLIERSIAGFKEIEYEVMRDGADNALVVCNMENFDPVGIHTGDSIVFAPSQTISDYEYQMLRDASLKIIRALKIEGGCNVQLALDPNSFKYYVIEVNPRVSRSSALASKATGYPIAKLAAKIAVGLTLDEIINPVTGSTYAMFEPALDYVVAKIPRFPFDKFEHGERRLGTQMKATGEVMAIGRNIEESLLKACRSLEVGVDHNELPALSQVSDDELMRKIVKVQDDRLFYISEAIRRGYSPDEIAELTKIDVFFLDKLLHIYEIEQELASHIGDSYVLKKAKQNGFADTKIATLWDMTAQQVRRIRQDQKIMPVYKMVDTCAAEFESATPYFYSTYGFENESVKSSKESVLVLGSGPIRIGQGVEFDYATVHSVKAIQAAGYEAIIMNSNPETVSTDFSVSDKLYFEPLTFEDVMNVIDLEQPKGVIVQFGGQTAINLAEPLSKAGVKILGTQVADLDRAEDRDLFEQALKELDIPQPPGQTATNEEEAIEAARKIGFPVLVRPSYVLGGRAMEIVENEADLRSYMRTAVKASPDHPVLVDSYIVGDECEVDAISDGRQVLIPGIMEHIERAGVHSGDSMAAYPPQTLSQKVKDTIADYTKRLALGLNCIGMMNIQFVIKDEQVYVIEVNPRASRTVPFLSKVTDIPMAQVATRLILGETLAELDYEDGLHPESFMVHIKAPVFSFSKLAKVDSLLGPEMKSTGEVMGSDRTLEKALYKAFEASYLHLPNFGNVVFTIADDSKEEALQLAQRFANIGYGIWATKGTASYFENHGLHVRLVEKIGSDDDKDIPAYIRKGKIQAIINTVGTKRTADKHGQIIRSSAIEHGVPLFTALDTADAMLKVLESRSFTTEAI.

The segment at 1-401 is carboxyphosphate synthetic domain; the sequence is MPKRKDIQKI…SLLKACRSLE (401 aa). Positions 129, 169, 175, 176, 208, 210, 215, 241, 242, 243, 284, and 298 each coordinate ATP. The region spanning 133–327 is the ATP-grasp 1 domain; sequence KQLMEELGQP…IAKLAAKIAV (195 aa). The Mg(2+) site is built by glutamine 284, glutamate 298, and asparagine 300. Mn(2+) is bound by residues glutamine 284, glutamate 298, and asparagine 300. An oligomerization domain region spans residues 402–546; that stretch reads VGVDHNELPA…YSTYGFENES (145 aa). The interval 547 to 929 is carbamoyl phosphate synthetic domain; the sequence is VKSSKESVLV…ALYKAFEASY (383 aa). Positions 671-861 constitute an ATP-grasp 2 domain; that stretch reads EQALKELDIP…MAQVATRLIL (191 aa). ATP is bound by residues arginine 707, serine 746, isoleucine 748, glutamate 752, glycine 777, valine 778, histidine 779, serine 780, glutamine 820, and glutamate 832. Glutamine 820, glutamate 832, and asparagine 834 together coordinate Mg(2+). The Mn(2+) site is built by glutamine 820, glutamate 832, and asparagine 834. Residues 930–1059 form the MGS-like domain; it reads LHLPNFGNVV…ESRSFTTEAI (130 aa). The allosteric domain stretch occupies residues 930 to 1059; it reads LHLPNFGNVV…ESRSFTTEAI (130 aa).

The protein belongs to the CarB family. As to quaternary structure, composed of two chains; the small (or glutamine) chain promotes the hydrolysis of glutamine to ammonia, which is used by the large (or ammonia) chain to synthesize carbamoyl phosphate. Tetramer of heterodimers (alpha,beta)4. It depends on Mg(2+) as a cofactor. Requires Mn(2+) as cofactor.

It catalyses the reaction hydrogencarbonate + L-glutamine + 2 ATP + H2O = carbamoyl phosphate + L-glutamate + 2 ADP + phosphate + 2 H(+). The catalysed reaction is hydrogencarbonate + NH4(+) + 2 ATP = carbamoyl phosphate + 2 ADP + phosphate + 2 H(+). Its pathway is amino-acid biosynthesis; L-arginine biosynthesis; carbamoyl phosphate from bicarbonate: step 1/1. It participates in pyrimidine metabolism; UMP biosynthesis via de novo pathway; (S)-dihydroorotate from bicarbonate: step 1/3. Functionally, large subunit of the glutamine-dependent carbamoyl phosphate synthetase (CPSase). CPSase catalyzes the formation of carbamoyl phosphate from the ammonia moiety of glutamine, carbonate, and phosphate donated by ATP, constituting the first step of 2 biosynthetic pathways, one leading to arginine and/or urea and the other to pyrimidine nucleotides. The large subunit (synthetase) binds the substrates ammonia (free or transferred from glutamine from the small subunit), hydrogencarbonate and ATP and carries out an ATP-coupled ligase reaction, activating hydrogencarbonate by forming carboxy phosphate which reacts with ammonia to form carbamoyl phosphate. This chain is Carbamoyl phosphate synthase large chain, found in Streptococcus gordonii (strain Challis / ATCC 35105 / BCRC 15272 / CH1 / DL1 / V288).